Here is a 616-residue protein sequence, read N- to C-terminus: Dihydroxy-acid dehydratase (616 aa).

Mg(2+) is bound at residue D81. [2Fe-2S] cluster is bound at residue C122. Residues D123 and K124 each coordinate Mg(2+). Position 124 is an N6-carboxylysine (K124). [2Fe-2S] cluster is bound at residue C195. E491 contacts Mg(2+). Catalysis depends on S517, which acts as the Proton acceptor.

The protein belongs to the IlvD/Edd family. As to quaternary structure, homodimer. [2Fe-2S] cluster is required as a cofactor. The cofactor is Mg(2+).

The enzyme catalyses (2R)-2,3-dihydroxy-3-methylbutanoate = 3-methyl-2-oxobutanoate + H2O. It catalyses the reaction (2R,3R)-2,3-dihydroxy-3-methylpentanoate = (S)-3-methyl-2-oxopentanoate + H2O. It participates in amino-acid biosynthesis; L-isoleucine biosynthesis; L-isoleucine from 2-oxobutanoate: step 3/4. It functions in the pathway amino-acid biosynthesis; L-valine biosynthesis; L-valine from pyruvate: step 3/4. In terms of biological role, functions in the biosynthesis of branched-chain amino acids. Catalyzes the dehydration of (2R,3R)-2,3-dihydroxy-3-methylpentanoate (2,3-dihydroxy-3-methylvalerate) into 2-oxo-3-methylpentanoate (2-oxo-3-methylvalerate) and of (2R)-2,3-dihydroxy-3-methylbutanoate (2,3-dihydroxyisovalerate) into 2-oxo-3-methylbutanoate (2-oxoisovalerate), the penultimate precursor to L-isoleucine and L-valine, respectively. The chain is Dihydroxy-acid dehydratase from Photorhabdus laumondii subsp. laumondii (strain DSM 15139 / CIP 105565 / TT01) (Photorhabdus luminescens subsp. laumondii).